A 191-amino-acid chain; its full sequence is Probable DNA-directed RNA polymerase subunit delta (191 aa).

An HTH HARE-type domain is found at 14-83 (LSMIEVARAI…GENKWGLRSW (70 aa)). The interval 118–191 (DEDAIDYRDD…EDEEDEEPVL (74 aa)) is disordered.

This sequence belongs to the RpoE family. In terms of assembly, RNAP is composed of a core of 2 alpha, a beta and a beta' subunits. The core is associated with a delta subunit and one of several sigma factors.

Functionally, participates in both the initiation and recycling phases of transcription. In the presence of the delta subunit, RNAP displays an increased specificity of transcription, a decreased affinity for nucleic acids, and an increased efficiency of RNA synthesis because of enhanced recycling. In Streptococcus pyogenes serotype M18 (strain MGAS8232), this protein is Probable DNA-directed RNA polymerase subunit delta.